A 204-amino-acid polypeptide reads, in one-letter code: Small ribosomal subunit protein uS7 (204 aa).

Position 1 is an N-acetylmethionine (M1). The residue at position 2 (T2) is an N-acetylthreonine; in 40S ribosomal protein S5, N-terminally processed. T14 is subject to Phosphothreonine. The residue at position 47 (K47) is an N6-acetyllysine; alternate. Residue K47 forms a Glycyl lysine isopeptide (Lys-Gly) (interchain with G-Cter in SUMO2); alternate linkage. S142 is modified (phosphoserine).

This sequence belongs to the universal ribosomal protein uS7 family. As to quaternary structure, component of the small ribosomal subunit. Part of the small subunit (SSU) processome, composed of more than 70 proteins and the RNA chaperone small nucleolar RNA (snoRNA) U3.

Its subcellular location is the cytoplasm. It localises to the nucleus. The protein resides in the nucleolus. In terms of biological role, component of the small ribosomal subunit. The ribosome is a large ribonucleoprotein complex responsible for the synthesis of proteins in the cell. Part of the small subunit (SSU) processome, first precursor of the small eukaryotic ribosomal subunit. During the assembly of the SSU processome in the nucleolus, many ribosome biogenesis factors, an RNA chaperone and ribosomal proteins associate with the nascent pre-rRNA and work in concert to generate RNA folding, modifications, rearrangements and cleavage as well as targeted degradation of pre-ribosomal RNA by the RNA exosome. The chain is Small ribosomal subunit protein uS7 (RPS5) from Bos taurus (Bovine).